Here is a 133-residue protein sequence, read N- to C-terminus: ATP synthase epsilon chain, chloroplastic (133 aa).

It belongs to the ATPase epsilon chain family. F-type ATPases have 2 components, CF(1) - the catalytic core - and CF(0) - the membrane proton channel. CF(1) has five subunits: alpha(3), beta(3), gamma(1), delta(1), epsilon(1). CF(0) has three main subunits: a, b and c.

Its subcellular location is the plastid. It localises to the chloroplast thylakoid membrane. Produces ATP from ADP in the presence of a proton gradient across the membrane. In Piper cenocladum (Ant piper), this protein is ATP synthase epsilon chain, chloroplastic.